Consider the following 429-residue polypeptide: Arsenical pump membrane protein (429 aa).

10 helical membrane passes run isoleucine 24–alanine 44, isoleucine 46–isoleucine 66, isoleucine 98–leucine 118, isoleucine 121–methionine 141, valine 178–phenylalanine 198, tryptophan 228–valine 248, serine 249–isoleucine 269, valine 274–tyrosine 294, glycine 316–methionine 335, and isoleucine 407–valine 427.

Its subcellular location is the cell inner membrane. Functionally, involved in arsenical resistance. Thought to form the channel of an arsenite pump. The polypeptide is Arsenical pump membrane protein (arsB) (Escherichia coli).